The chain runs to 323 residues: Tyrosine recombinase XerD (323 aa).

Residues 21–106 (AEDDQAIQRF…TLRGFYALCL (86 aa)) form the Core-binding (CB) domain. In terms of domain architecture, Tyr recombinase spans 127 to 317 (SLPKALTESQ…ARQHLQTLHA (191 aa)). Residues R167, K191, H269, R272, and H295 contribute to the active site. Catalysis depends on Y304, which acts as the O-(3'-phospho-DNA)-tyrosine intermediate.

It belongs to the 'phage' integrase family. XerD subfamily. In terms of assembly, forms a cyclic heterotetrameric complex composed of two molecules of XerC and two molecules of XerD.

It localises to the cytoplasm. In terms of biological role, site-specific tyrosine recombinase, which acts by catalyzing the cutting and rejoining of the recombining DNA molecules. The XerC-XerD complex is essential to convert dimers of the bacterial chromosome into monomers to permit their segregation at cell division. It also contributes to the segregational stability of plasmids. This chain is Tyrosine recombinase XerD, found in Xanthomonas campestris pv. campestris (strain ATCC 33913 / DSM 3586 / NCPPB 528 / LMG 568 / P 25).